The following is an 89-amino-acid chain: LSM complex subunit LSM3 (89 aa).

Residues 3–82 (TPLDLLKLNL…VTLISTPSED (80 aa)) form the Sm domain.

It belongs to the snRNP Sm proteins family. In terms of assembly, component of the heptameric LSM1-LSM7 complex that forms a seven-membered ring structure with a donut shape. The LSm subunits are arranged in the order LSM1, LSM2, LSM3, LSM6, LSM5, LSM7 and LSM4. Except for LSM1, where a C-terminal helix crosses the ring structure to form additional interactions with LSM3 and LSM6, each subunit interacts only with its two neighboring subunits. The LSM1-LSM7 complex interacts with PAT1; within the complex PAT1 has direct interactions with LSM2 and LSM3. The LSM1-LSM7 complex interacts with XRN1. Component of the heptameric LSM2-LSM8 complex that forms a seven-membered ring structure with a donut shape; an RNA strand can pass through the hole in the center of the ring structure. The LSm subunits are arranged in the order LSM8, LSM2, LSM3, LSM6, LSM5, LSM7 and LSM4. Component of the spliceosome U4/U6-U5 tri-snRNP complex composed of the U4, U6 and U5 snRNAs and at least PRP3, PRP4, PRP6, PRP8, PRP18, PRP31, PRP38, SNU13, SNU23, SNU66, SNU114, SPP381, SMB1, SMD1, SMD2, SMD3, SMX2, SMX3, LSM2, LSM3, LSM4, LSM5, LSM6, LSM7, LSM8, BRR2 and DIB1. May be found in a complex comprising LSM2-LSM7 without LSM1 or LSM8; the complex associates with pre-P RNA and snoRNA SNR5.

The protein localises to the nucleus. It localises to the nucleolus. It is found in the cytoplasm. Its function is as follows. Component of LSm protein complexes, which are involved in RNA processing and may function in a chaperone-like manner. Component of the cytoplasmic LSM1-LSM7 complex which is involved in mRNA degradation by activating the decapping step. Together with PAT1, the LSM1-LSM7 complex binds to osmotic stress-activated mRNAs to attenuate the osmotic stress response, probably by limiting ribosome access to the mRNA and consequently translation. Component of the nuclear LSM2-LSM8 complex, which is involved in spliceosome assembly. The LSM2-LSM8 complex plays a role in the biogenesis of the spliceosomal U4/U6-U5 tri-snRNP complex by accelerating PRP24-mediated annealing of U4/U6 di-snRNA. The LSM2-LSM8 complex binds U6 snRNA terminating with a non-cyclic 3' phosphate group. LSM2-LSM8 is probably also involved in degradation of nuclear pre-mRNA by targeting them for decapping. LSM2-LSM8 could be involved in processing of pre-tRNAs, pre-rRNAs and U3 snoRNA, although involvement may be indirect. In a complex that probably contains LSM2-LSM7, but not LSM1 or LSM8, associates with the precursor of the RNA component of RNase P (pre-P RNA) and may be involved in maturing pre-P RNA; the complex also associates with snoRNA SNR5. This chain is LSM complex subunit LSM3 (LSM3), found in Saccharomyces cerevisiae (strain ATCC 204508 / S288c) (Baker's yeast).